The primary structure comprises 548 residues: Rop guanine nucleotide exchange factor 1 (548 aa).

Residues 1 to 12 (MGSLSSEEDDEV) show a composition bias toward acidic residues. A disordered region spans residues 1–38 (MGSLSSEEDDEVSSERCGSYSPSADISESESSSSFSCH). A compositionally biased stretch (low complexity) spans 19–36 (SYSPSADISESESSSSFS). In terms of domain architecture, PRONE spans 81 to 462 (DKQPDNDLSE…DAMRRSISVT (382 aa)). Residues 458 to 548 (SISVTESLSL…RVTGVTPERD (91 aa)) form an involved in auto-inhibition region. Residues serine 460 and serine 480 each carry the phosphoserine modification.

Interacts with ARAC10/ROP11 and FER. Forms a complex with ARAC11/ROP1 and PRK2. Interacts in vitro (via PRONE domain) with PRK1, PRK2, PRK3 and PRK4. The C-terminal region is also important for the interaction with PRK2. Phosphorylated at Ser-460 and Ser-480 by PRK2. As to expression, expressed in roots, cotyledons, leaves, stems, sepals, petals, anthers, pollen grains, stigmas and siliques.

It is found in the cytoplasm. The protein localises to the cytosol. It localises to the cell membrane. Phosphorylation at Ser-460 and Ser-480 by PRK2 releases ROPGEF1 auto-inhibition, thereby activating ROPGEF1, which in turn activates ARAC11/ROP1. In terms of biological role, guanine-nucleotide exchange factor (GEF) that acts as an activator of Rop (Rho of plants) GTPases by promoting the exchange of GDP for GTP. Acts downstream of PRK2 in the control of polarized pollen tube growth by activating ARAC11/ROP1. In association with ROPGEF4, acts as a specific regulator of ARAC10/ROP11 function in ABA-mediated stomatal closure. May play a role in the Rac/Rop-signaling pathway that controls ROS-mediated root hair development. The sequence is that of Rop guanine nucleotide exchange factor 1 (ROPGEF1) from Arabidopsis thaliana (Mouse-ear cress).